The chain runs to 446 residues: Nitrate/nitrite binding protein NrtA (446 aa).

A signal peptide spans Met-1–Gly-28. Cys-29 is lipidated: N-palmitoyl cysteine. The S-diacylglycerol cysteine moiety is linked to residue Cys-29. Trp-102, Gln-155, His-196, Gly-240, and Lys-269 together coordinate nitrate.

It belongs to the CmpA/NrtA family. The complex is composed of two ATP-binding proteins (NrtC and NrtD), two transmembrane proteins (NrtB) and a solute-binding protein (NrtA).

The protein localises to the cell inner membrane. Functionally, part of the ABC transporter complex NrtABCD involved in nitrate uptake. The complex is probably also involved in nitrite transport. NrtA is the substrate-binding protein. Binds nitrate. This chain is Nitrate/nitrite binding protein NrtA, found in Synechocystis sp. (strain ATCC 27184 / PCC 6803 / Kazusa).